We begin with the raw amino-acid sequence, 184 residues long: Oligoribonuclease (184 aa).

The region spanning 8 to 171 is the Exonuclease domain; it reads LIWIDLEMTG…EDIRESVVEL (164 aa). Residue Tyr129 is part of the active site.

This sequence belongs to the oligoribonuclease family.

It localises to the cytoplasm. Its function is as follows. 3'-to-5' exoribonuclease specific for small oligoribonucleotides. The chain is Oligoribonuclease from Buchnera aphidicola subsp. Acyrthosiphon pisum (strain APS) (Acyrthosiphon pisum symbiotic bacterium).